The chain runs to 721 residues: Methionine--tRNA ligase (721 aa).

A 'HIGH' region motif is present at residues 27–37 (PYANGQIHIGH). Cys158, Cys161, Cys171, and Cys174 together coordinate Zn(2+). Residues 348 to 352 (KMSKS) carry the 'KMSKS' region motif. Lys351 is an ATP binding site. One can recognise a tRNA-binding domain in the interval 615–721 (DFAKIDLRIA…SGAKPGMRVK (107 aa)).

This sequence belongs to the class-I aminoacyl-tRNA synthetase family. MetG type 1 subfamily. Homodimer. Zn(2+) serves as cofactor.

It is found in the cytoplasm. It catalyses the reaction tRNA(Met) + L-methionine + ATP = L-methionyl-tRNA(Met) + AMP + diphosphate. Functionally, is required not only for elongation of protein synthesis but also for the initiation of all mRNA translation through initiator tRNA(fMet) aminoacylation. The sequence is that of Methionine--tRNA ligase from Burkholderia vietnamiensis (strain G4 / LMG 22486) (Burkholderia cepacia (strain R1808)).